A 467-amino-acid polypeptide reads, in one-letter code: Tel2-interacting protein 2 (467 aa).

A coiled-coil region spans residues 4-45 (YKELARRLHTLQSKNEKEALEKQIDFLDKLVVEVDSLVHEQD).

It belongs to the TTI2 family. As to quaternary structure, component of the TTT complex composed of tel2, tti1 and tti2. Interacts with tel2 and ttiI1. Component of the ASTRA complex composed of at least rvb1, rvb2, tra1, tel2, tti1 and tti2.

The protein resides in the nucleus. In terms of biological role, component of the tel2-tti1-tti2 (TTT) complex that stabilizes protein levels of the phosphatidylinositol 3-kinase-related protein kinase (PIKK) family proteins. The TTT complex is involved in the cellular resistance to DNA damage stresses, like ionizing radiation (IR), ultraviolet (UV) and mitomycin C (MMC). Component of the ASTRA complex involved in chromatin remodeling. The chain is Tel2-interacting protein 2 from Schizosaccharomyces pombe (strain 972 / ATCC 24843) (Fission yeast).